The chain runs to 341 residues: Glyceraldehyde-3-phosphate dehydrogenase 2 (341 aa).

NAD(+) is bound by residues 12-13 (RI), arginine 78, and threonine 120. Residues 152-154 (SCT) and threonine 183 contribute to the D-glyceraldehyde 3-phosphate site. The active-site Nucleophile is the cysteine 153. Asparagine 184 serves as a coordination point for NAD(+). D-glyceraldehyde 3-phosphate contacts are provided by residues arginine 198, 211–212 (TG), and arginine 234. NAD(+) is bound at residue asparagine 313.

Belongs to the glyceraldehyde-3-phosphate dehydrogenase family. Homotetramer.

Its subcellular location is the cytoplasm. The catalysed reaction is D-glyceraldehyde 3-phosphate + phosphate + NAD(+) = (2R)-3-phospho-glyceroyl phosphate + NADH + H(+). Its pathway is carbohydrate degradation; glycolysis; pyruvate from D-glyceraldehyde 3-phosphate: step 1/5. Catalyzes the oxidative phosphorylation of glyceraldehyde 3-phosphate (G3P) to 1,3-bisphosphoglycerate (BPG) using the cofactor NAD. The first reaction step involves the formation of a hemiacetal intermediate between G3P and a cysteine residue, and this hemiacetal intermediate is then oxidized to a thioester, with concomitant reduction of NAD to NADH. The reduced NADH is then exchanged with the second NAD, and the thioester is attacked by a nucleophilic inorganic phosphate to produce BPG. This is Glyceraldehyde-3-phosphate dehydrogenase 2 (gapA2) from Staphylococcus epidermidis (strain ATCC 35984 / DSM 28319 / BCRC 17069 / CCUG 31568 / BM 3577 / RP62A).